We begin with the raw amino-acid sequence, 676 residues long: Phosphatidylinositol-3,5-bisphosphate 3-phosphatase MTMR6 (676 aa).

Residues 125-501 (GWRRLDWNSE…ARFTVWTAMY (377 aa)) enclose the Myotubularin phosphatase domain. A 1,2-diacyl-sn-glycero-3-phospho-(1D-myo-inositol-3,5-bisphosphate)-binding residues include Asn-249, Asn-274, and Ile-275. A 1,2-diacyl-sn-glycero-3-phospho-(1D-myo-inositol-3-phosphate) contacts are provided by Asn-249, Asn-274, and Ile-275. Residues 249–252 (NKVQ), 274–275 (NI), and 335–341 (CSDGWDR) each bind substrate. The Phosphocysteine intermediate role is filled by Cys-335. Positions 336, 337, 338, 339, 340, 341, 377, and 381 each coordinate a 1,2-diacyl-sn-glycero-3-phospho-(1D-myo-inositol-3,5-bisphosphate). A 1,2-diacyl-sn-glycero-3-phospho-(1D-myo-inositol-3-phosphate)-binding residues include Ser-336, Asp-337, Gly-338, Trp-339, Asp-340, and Arg-341. Arg-381 provides a ligand contact to a 1,2-diacyl-sn-glycero-3-phospho-(1D-myo-inositol-3-phosphate). A substrate-binding site is contributed by Arg-381. The FYVE-type zinc-finger motif lies at 618-675 (KWQPLRGADRCSNPACRGEFSSTIERRIHCHLCGMIFCRRCLKVSADERERVCDKCKT).

Belongs to the protein-tyrosine phosphatase family. Non-receptor class myotubularin subfamily. In terms of assembly, heterodimer with mtm-9. As to expression, expressed in intestinal cells. Expressed in head neurons, pre-anal ganglion, hypodermal cells, anal depressor muscle and non-neuronal cells in the tail.

The protein resides in the cytoplasm. The protein localises to the membrane. It is found in the apical cell membrane. It carries out the reaction a 1,2-diacyl-sn-glycero-3-phospho-(1D-myo-inositol-3,5-bisphosphate) + H2O = a 1,2-diacyl-sn-glycero-3-phospho-(1D-myo-inositol-5-phosphate) + phosphate. The enzyme catalyses a 1,2-diacyl-sn-glycero-3-phospho-(1D-myo-inositol-3-phosphate) + H2O = a 1,2-diacyl-sn-glycero-3-phospho-(1D-myo-inositol) + phosphate. It catalyses the reaction 1,2-dioctanoyl-sn-glycero-3-phospho-(1D-myo-inositol-3,5-bisphosphate) + H2O = 1,2-dioctanoyl-sn-glycero-3-phospho-(1D-myo-inositol-5-phosphate) + phosphate. The catalysed reaction is 1,2-dioctanoyl-sn-glycero-3-phospho-(1-D-myo-inositol-3-phosphate) + H2O = 1,2-dioctanoyl-sn-glycero-3-phospho-(1D-myo-inositol) + phosphate. Its function is as follows. Probable lipid phosphatase that specifically dephosphorylates the D-3 position of phosphatidylinositol 3-phosphate and phosphatidylinositol 3,5-bisphosphate, generating phosphatidylinositol and phosphatidylinositol 5-phosphate. In association with mtm-9, plays a role in endosome trafficking probably by regulating phosphatidylinositol-3-phosphate levels. Regulates fluid phase endocytosis in coelomocytes. Controls the endosomal localization of sorting nexin snx-3 and the levels of sorting receptor mig-14. By regulating the retrograde transport of mig-14, may be involved in the secretion of Wnt ligands such as egl-20. Regulates posterior migration of QL neuroblast descendants and the anterior migration of QR neuroblast descendants and HSN neurons during larval development. Involved in the formation of correct synapse number in DA9 motor neurons probably in part by regulating the secretion of Wnt ligand egl-20. This Caenorhabditis elegans protein is Phosphatidylinositol-3,5-bisphosphate 3-phosphatase MTMR6.